We begin with the raw amino-acid sequence, 539 residues long: Bifunctional purine biosynthesis protein PurH (539 aa).

Residues 8-159 enclose the MGS-like domain; the sequence is FPIPDLHRVR…KNYAYTGVVT (152 aa).

The protein belongs to the PurH family.

The catalysed reaction is (6R)-10-formyltetrahydrofolate + 5-amino-1-(5-phospho-beta-D-ribosyl)imidazole-4-carboxamide = 5-formamido-1-(5-phospho-D-ribosyl)imidazole-4-carboxamide + (6S)-5,6,7,8-tetrahydrofolate. It carries out the reaction IMP + H2O = 5-formamido-1-(5-phospho-D-ribosyl)imidazole-4-carboxamide. It functions in the pathway purine metabolism; IMP biosynthesis via de novo pathway; 5-formamido-1-(5-phospho-D-ribosyl)imidazole-4-carboxamide from 5-amino-1-(5-phospho-D-ribosyl)imidazole-4-carboxamide (10-formyl THF route): step 1/1. It participates in purine metabolism; IMP biosynthesis via de novo pathway; IMP from 5-formamido-1-(5-phospho-D-ribosyl)imidazole-4-carboxamide: step 1/1. This Bartonella tribocorum (strain CIP 105476 / IBS 506) protein is Bifunctional purine biosynthesis protein PurH.